A 159-amino-acid chain; its full sequence is uncharacterized protein (159 aa).

The tract at residues 9-36 (VTSGNKEKKKKRSSAGLTGHAPPAADSS) is disordered.

This is an uncharacterized protein from Caenorhabditis elegans.